The primary structure comprises 216 residues: Imidazole glycerol phosphate synthase subunit HisH (216 aa).

The region spanning 2-216 (RVAIIDYGSG…LIANFLKWKP (215 aa)) is the Glutamine amidotransferase type-1 domain. Cys88 functions as the Nucleophile in the catalytic mechanism. Active-site residues include His196 and Glu198.

In terms of assembly, heterodimer of HisH and HisF.

Its subcellular location is the cytoplasm. The catalysed reaction is 5-[(5-phospho-1-deoxy-D-ribulos-1-ylimino)methylamino]-1-(5-phospho-beta-D-ribosyl)imidazole-4-carboxamide + L-glutamine = D-erythro-1-(imidazol-4-yl)glycerol 3-phosphate + 5-amino-1-(5-phospho-beta-D-ribosyl)imidazole-4-carboxamide + L-glutamate + H(+). The enzyme catalyses L-glutamine + H2O = L-glutamate + NH4(+). It participates in amino-acid biosynthesis; L-histidine biosynthesis; L-histidine from 5-phospho-alpha-D-ribose 1-diphosphate: step 5/9. IGPS catalyzes the conversion of PRFAR and glutamine to IGP, AICAR and glutamate. The HisH subunit catalyzes the hydrolysis of glutamine to glutamate and ammonia as part of the synthesis of IGP and AICAR. The resulting ammonia molecule is channeled to the active site of HisF. This chain is Imidazole glycerol phosphate synthase subunit HisH, found in Brucella abortus biovar 1 (strain 9-941).